A 663-amino-acid polypeptide reads, in one-letter code: UvrABC system protein B (663 aa).

Residues 30-417 (EGIKAGKRHQ…TDKMVEQIIR (388 aa)) form the Helicase ATP-binding domain. Residue 43–50 (GATGTGKT) participates in ATP binding. The short motif at 96–119 (YYDYYQPEAYVPSTDTFIEKDASI) is the Beta-hairpin element. The region spanning 434-600 (QIDDLLSEIQ…TINKKIHDLI (167 aa)) is the Helicase C-terminal domain. Residues 627–662 (QKTIDNIEKEMKQAAKDLDFEKATELRDMLFELKAE) enclose the UVR domain.

This sequence belongs to the UvrB family. Forms a heterotetramer with UvrA during the search for lesions. Interacts with UvrC in an incision complex.

Its subcellular location is the cytoplasm. In terms of biological role, the UvrABC repair system catalyzes the recognition and processing of DNA lesions. A damage recognition complex composed of 2 UvrA and 2 UvrB subunits scans DNA for abnormalities. Upon binding of the UvrA(2)B(2) complex to a putative damaged site, the DNA wraps around one UvrB monomer. DNA wrap is dependent on ATP binding by UvrB and probably causes local melting of the DNA helix, facilitating insertion of UvrB beta-hairpin between the DNA strands. Then UvrB probes one DNA strand for the presence of a lesion. If a lesion is found the UvrA subunits dissociate and the UvrB-DNA preincision complex is formed. This complex is subsequently bound by UvrC and the second UvrB is released. If no lesion is found, the DNA wraps around the other UvrB subunit that will check the other stand for damage. This is UvrABC system protein B from Staphylococcus aureus (strain COL).